Consider the following 392-residue polypeptide: Obg-like ATPase 1 (392 aa).

Residues 21–285 (LKTGIVGMPN…FTEEEAIEEC (265 aa)) form the OBG-type G domain. 30–35 (NVGKST) is an ATP binding site. Mg(2+) contacts are provided by serine 34 and threonine 55. Methionine 233 contributes to the ATP binding site. One can recognise a TGS domain in the interval 306-389 (NLINYFTCGE…ESGDIAHWKA (84 aa)).

This sequence belongs to the TRAFAC class OBG-HflX-like GTPase superfamily. OBG GTPase family. YchF/OLA1 subfamily. Monomer. Mg(2+) is required as a cofactor.

The protein localises to the cytoplasm. Its subcellular location is the nucleus. Its function is as follows. Hydrolyzes ATP, and can also hydrolyze GTP with lower efficiency. Has lower affinity for GTP. Negatively regulates the G2/M transition in the cell cycle. This Schizosaccharomyces pombe (strain 972 / ATCC 24843) (Fission yeast) protein is Obg-like ATPase 1.